Here is an 843-residue protein sequence, read N- to C-terminus: Glycogen phosphorylase, brain form (843 aa).

Position 2 is an N-acetylalanine (A2). S15 carries the post-translational modification Phosphoserine; by PHK; in form phosphorylase A. Residues D43, Y197, and R310 each contribute to the AMP site. Y197 carries the phosphotyrosine modification. At Y473 the chain carries Phosphotyrosine. K569 contributes to the pyridoxal 5'-phosphate binding site. Residues 677–678 are pyridoxal 5'-phosphate; sequence TG. K681 carries the N6-(pyridoxal phosphate)lysine modification.

This sequence belongs to the glycogen phosphorylase family. In terms of assembly, homodimer. Dimers associate into a tetramer to form the enzymatically active phosphorylase A. It depends on pyridoxal 5'-phosphate as a cofactor. Phosphorylation of Ser-15 converts phosphorylase B (unphosphorylated) to phosphorylase A.

The enzyme catalyses [(1-&gt;4)-alpha-D-glucosyl](n) + phosphate = [(1-&gt;4)-alpha-D-glucosyl](n-1) + alpha-D-glucose 1-phosphate. With respect to regulation, activity of phosphorylase is controlled both by allosteric means (through the non-covalent binding of metabolites) and by covalent modification. Thus AMP allosterically activates, whereas ATP, ADP, and glucose-6-phosphate allosterically inhibit, phosphorylase B. Its function is as follows. Glycogen phosphorylase that regulates glycogen mobilization. Phosphorylase is an important allosteric enzyme in carbohydrate metabolism. Enzymes from different sources differ in their regulatory mechanisms and in their natural substrates. However, all known phosphorylases share catalytic and structural properties. The protein is Glycogen phosphorylase, brain form (PYGB) of Pongo abelii (Sumatran orangutan).